A 203-amino-acid chain; its full sequence is SOSS complex subunit B1-A (203 aa).

The segment at residues 22 to 92 is a DNA-binding region (OB); the sequence is IVLETGRVTK…TLYTGRGGDL (71 aa). The disordered stretch occupies residues 110 to 203; it reads EPNPEYIAQQ…GKESRRTGKR (94 aa). Low complexity predominate over residues 118 to 140; sequence QQSQSKQGQQESGTGTNNHNSSS. A compositionally biased stretch (polar residues) spans 149-182; it reads ENGNGSNSSGPPAHQSTAPAHSASGRITRSQPNH.

Belongs to the SOSS-B family. SOSS-B1 subfamily. In terms of assembly, component of the SOSS complex, composed of soss-b (soss-b1/nabp2 or soss-b2/nabp1), soss-a/ints3 and soss-c/inip. SOSS complexes containing soss-b1/nabp2 are more abundant than complexes containing soss-b2/nabp1.

The protein localises to the nucleus. Its function is as follows. Component of the SOSS complex, a multiprotein complex that functions downstream of the MRN complex to promote DNA repair and G2/M checkpoint. In the SOSS complex, acts as a sensor of single-stranded DNA that binds to single-stranded DNA. The SOSS complex associates with DNA lesions and influences diverse endpoints in the cellular DNA damage response including cell-cycle checkpoint activation, recombinational repair and maintenance of genomic stability. Required for efficient homologous recombination-dependent repair of double-strand breaks (DSBs). This is SOSS complex subunit B1-A (nabp2-a) from Xenopus laevis (African clawed frog).